The chain runs to 233 residues: Riboflavin kinase (233 aa).

Residues 1–99 are unknown; sequence MSGATSTGDV…YRRIFEDPGE (99 aa). The interval 100 to 233 is riboflavin kinase; it reads LALAGTVTSG…DDEVTIRVEA (134 aa). 109-114 is a CDP binding site; it reads GMGEGR. Positions 138 and 140 each coordinate Mg(2+). The FMN site is built by threonine 200 and glutamate 208. 213–216 contacts CDP; the sequence is VKLR.

The protein belongs to the archaeal riboflavin kinase family. Mg(2+) is required as a cofactor.

The enzyme catalyses riboflavin + CTP = CDP + FMN + H(+). The protein operates within cofactor biosynthesis; FMN biosynthesis; FMN from riboflavin (CTP route): step 1/1. In terms of biological role, catalyzes the CTP-dependent phosphorylation of riboflavin (vitamin B2) to form flavin mononucleotide (FMN). This chain is Riboflavin kinase (ribK), found in Halobacterium salinarum (strain ATCC 700922 / JCM 11081 / NRC-1) (Halobacterium halobium).